The following is a 554-amino-acid chain: DNA mismatch repair protein MutL (554 aa).

The protein belongs to the DNA mismatch repair MutL/HexB family.

In terms of biological role, this protein is involved in the repair of mismatches in DNA. It is required for dam-dependent methyl-directed DNA mismatch repair. May act as a 'molecular matchmaker', a protein that promotes the formation of a stable complex between two or more DNA-binding proteins in an ATP-dependent manner without itself being part of a final effector complex. This is DNA mismatch repair protein MutL from Crocosphaera subtropica (strain ATCC 51142 / BH68) (Cyanothece sp. (strain ATCC 51142)).